The sequence spans 648 residues: EF-hand domain-containing protein 1 (648 aa).

The interval 1–45 (MGTNPVHGLPFLPGSSFTDSTKTAFHRSQTLNYRNGYAVVRRPTM) is required for its localization in the mitotic spindle and interaction with alpha-tubulin. 3 DM10 domains span residues 93-198 (DKKV…ESQG), 239-359 (DKQV…KDKF), and 416-520 (DNKV…ESNA). One can recognise an EF-hand domain in the interval 582 to 617 (SYKENLRETFQMYDKDESGYVDRETFFKICETLNVP).

In terms of assembly, microtubule inner protein component of sperm flagellar doublet microtubules. Interacts with the C-terminus of CACNA1E. Interacts with alpha-tubulin. Expressed in adult brain including hippocampus, cerebellum, cerebral cortex, thalamus, hypothalamus, amygdala and upper brainstem. Expressed in soma and dentrites of pyramidal neurons of the hippocampal CA1 region, pyramidal neurons of the cerebral cortex and Purkinje cells of cerebellum. Highly expressed in testis, trachea, and oviduct, moderately in lung, and slightly in brain. Highly expressed in sperm flagella and tracheal cilia (at protein level).

The protein resides in the cytoplasm. It is found in the cytoskeleton. Its subcellular location is the cilium axoneme. The protein localises to the flagellum axoneme. It localises to the microtubule organizing center. The protein resides in the centrosome. It is found in the spindle. Its subcellular location is the spindle pole. In terms of biological role, microtubule inner protein (MIP) part of the dynein-decorated doublet microtubules (DMTs) in cilia axoneme, which is required for motile cilia beating. Microtubule-associated protein which regulates cell division and neuronal migration during cortical development. Necessary for radial and tangential cell migration during brain development, possibly acting as a regulator of cell morphology and process formation during migration. May enhance calcium influx through CACNA1E and stimulate programmed cell death. Overexpression of EFHC1 in hippocampal primary culture neurons induced apoptosis. This chain is EF-hand domain-containing protein 1 (Efhc1), found in Mus musculus (Mouse).